A 334-amino-acid chain; its full sequence is Cyclin N-terminal domain-containing protein 1 (334 aa).

A Cyclin N-terminal domain is found at 29–180 (NALLHLAQQN…ILKSLNFQIN (152 aa)).

As to quaternary structure, interacts with PRR19; this interaction promotes crossover formation. Interacts with RFC3 and RFC4; these interactions facilitate crossover formation. Interacts with CDC34; this interaction regulates the cell-cycle progression. In terms of tissue distribution, isoform 2 is expressed in spermatocyte.

It localises to the nucleus. The protein resides in the cytoplasm. It is found in the chromosome. Functionally, plays a role in the different steps of crossover formation during meiotic recombination. Participates in the crossover differentiation step of crossover-specific recombination intermediates through its interaction with PRR19. In addition, stimulates crossover formation through the interactions with RFC3 and RFC4 and simultaneously regulates cell-cycle progression through interactions with CDC34 and subsequent ubiquitination of WEE1. May also participates in an active deselection process that destabilizes or removes excess pre-CO intermediates. This is Cyclin N-terminal domain-containing protein 1 from Mus musculus (Mouse).